Consider the following 338-residue polypeptide: Putative peptide import ATP-binding protein BOV_A0348 (338 aa).

The 254-residue stretch at 10-263 (KGLRTVFRTR…PRHPYTMGLL (254 aa)) folds into the ABC transporter domain. 43–50 (GESGSGKS) lines the ATP pocket.

The protein belongs to the ABC transporter superfamily. As to quaternary structure, the complex is composed of two ATP-binding proteins (BOV_A0347 and BOV_A0348), two transmembrane proteins (BOV_A0350 and BOV_A0351) and a solute-binding protein (BOV_A0352).

It localises to the cell inner membrane. Its function is as follows. Probably part of an ABC transporter complex that could be involved in peptide import. Probably responsible for energy coupling to the transport system. In Brucella ovis (strain ATCC 25840 / 63/290 / NCTC 10512), this protein is Putative peptide import ATP-binding protein BOV_A0348.